Reading from the N-terminus, the 510-residue chain is Glycerol kinase (510 aa).

Thr-13 lines the ADP pocket. ATP contacts are provided by Thr-13 and Thr-14. A sn-glycerol 3-phosphate-binding site is contributed by Thr-13. ADP is bound at residue Arg-17. Residues Arg-83, Glu-84, Tyr-135, and Asp-255 each coordinate sn-glycerol 3-phosphate. Glycerol contacts are provided by Arg-83, Glu-84, Tyr-135, Asp-255, and Gln-256. Residues Thr-277, Gly-321, Gly-421, and Asn-425 each contribute to the ADP site. Thr-277, Gly-321, and Gly-421 together coordinate ATP.

This sequence belongs to the FGGY kinase family.

It carries out the reaction glycerol + ATP = sn-glycerol 3-phosphate + ADP + H(+). It functions in the pathway polyol metabolism; glycerol degradation via glycerol kinase pathway; sn-glycerol 3-phosphate from glycerol: step 1/1. Functionally, key enzyme in the regulation of glycerol uptake and metabolism. Catalyzes the phosphorylation of glycerol to yield sn-glycerol 3-phosphate. This Haloarcula marismortui (strain ATCC 43049 / DSM 3752 / JCM 8966 / VKM B-1809) (Halobacterium marismortui) protein is Glycerol kinase.